A 31-amino-acid chain; its full sequence is Photosystem II reaction center protein T (31 aa).

Residues 3-23 (SLVYIFVFVVALGVLFFAIAF) form a helical membrane-spanning segment.

This sequence belongs to the PsbT family. PSII is composed of 1 copy each of membrane proteins PsbA, PsbB, PsbC, PsbD, PsbE, PsbF, PsbH, PsbI, PsbJ, PsbK, PsbL, PsbM, PsbT, PsbX, PsbY, PsbZ, Psb30/Ycf12, peripheral proteins PsbO, CyanoQ (PsbQ), PsbU, PsbV and a large number of cofactors. It forms dimeric complexes.

It is found in the cellular thylakoid membrane. Functionally, found at the monomer-monomer interface of the photosystem II (PS II) dimer, plays a role in assembly and dimerization of PSII. PSII is a light-driven water plastoquinone oxidoreductase, using light energy to abstract electrons from H(2)O, generating a proton gradient subsequently used for ATP formation. The chain is Photosystem II reaction center protein T from Synechococcus elongatus (strain ATCC 33912 / PCC 7942 / FACHB-805) (Anacystis nidulans R2).